The primary structure comprises 297 residues: Carbamate kinase (297 aa).

Belongs to the carbamate kinase family.

The protein localises to the cytoplasm. It catalyses the reaction hydrogencarbonate + NH4(+) + ATP = carbamoyl phosphate + ADP + H2O + H(+). The catalysed reaction is carbamate + ATP = carbamoyl phosphate + ADP. The enzyme catalyses hydrogencarbonate + NH4(+) = carbamate + H2O + H(+). Its pathway is nitrogen metabolism; (S)-allantoin degradation. In terms of biological role, kinase involved in the anaerobic nitrogen utilization via the assimilation of allantoin. Catalyzes the transfer of a phosphate group from carbamoyl phosphate to ADP to produce ATP and leave carbamate, which spontaneously hydrolyzes to ammonia and hydrogencarbonate. This chain is Carbamate kinase, found in Escherichia coli O6:H1 (strain CFT073 / ATCC 700928 / UPEC).